The primary structure comprises 940 residues: Isoleucine--tRNA ligase (940 aa).

The 'HIGH' region signature appears at 58–68 (PYANGNIHIGH). Residue glutamate 563 participates in L-isoleucyl-5'-AMP binding. Positions 604–608 (KMSKS) match the 'KMSKS' region motif. An ATP-binding site is contributed by lysine 607. 4 residues coordinate Zn(2+): cysteine 903, cysteine 906, cysteine 923, and cysteine 926.

This sequence belongs to the class-I aminoacyl-tRNA synthetase family. IleS type 1 subfamily. Monomer. It depends on Zn(2+) as a cofactor.

The protein localises to the cytoplasm. It carries out the reaction tRNA(Ile) + L-isoleucine + ATP = L-isoleucyl-tRNA(Ile) + AMP + diphosphate. In terms of biological role, catalyzes the attachment of isoleucine to tRNA(Ile). As IleRS can inadvertently accommodate and process structurally similar amino acids such as valine, to avoid such errors it has two additional distinct tRNA(Ile)-dependent editing activities. One activity is designated as 'pretransfer' editing and involves the hydrolysis of activated Val-AMP. The other activity is designated 'posttransfer' editing and involves deacylation of mischarged Val-tRNA(Ile). The chain is Isoleucine--tRNA ligase from Buchnera aphidicola subsp. Acyrthosiphon pisum (strain 5A).